We begin with the raw amino-acid sequence, 272 residues long: Homeobox protein Hox-D12 (272 aa).

The segment at residues 204–263 (SRRKRKPYTKQQIAELENEFLANEFINRQKRKELSDRLNLSDQQVKIWFQNRRMKKKRLV) is a DNA-binding region (homeobox).

Belongs to the Abd-B homeobox family.

The protein resides in the nucleus. Sequence-specific transcription factor which is part of a developmental regulatory system that provides cells with specific positional identities on the anterior-posterior axis. In Heterodontus francisci (Horn shark), this protein is Homeobox protein Hox-D12 (HOXD12).